Here is a 147-residue protein sequence, read N- to C-terminus: Hemoglobin subunit beta-Y (147 aa).

The region spanning 3–147 is the Globin domain; sequence HFTAEEKAAI…VANALSLKYH (145 aa). The heme b site is built by His-64 and His-93.

This sequence belongs to the globin family. Heterotetramer of two alpha chains and two beta chains.

Functionally, this is a minor early embryonic beta chain. This chain is Hemoglobin subunit beta-Y (HBBY), found in Mesocricetus auratus (Golden hamster).